We begin with the raw amino-acid sequence, 20 residues long: Astacin-like peptidase p18 (20 aa).

The Peptidase M12A domain occupies 1 to 20; that stretch reads NAIPGNYYRWPYAKVPYVID.

The cofactor is Zn(2+).

Functionally, active against casein. Has a role as a digestive enzyme. The sequence is that of Astacin-like peptidase p18 from Argiope aurantia (Black-and-yellow garden spider).